Reading from the N-terminus, the 306-residue chain is Anamorsin (306 aa).

The interval 6 to 172 is N-terminal SAM-like domain; sequence IAPGQRVAVI…KPNFEVGSSS (167 aa). A linker region spans residues 173–224; that stretch reads QLKLSFAKKTSPSGKPSVDPATAKLWTLSASDMNDEEMDLLDSDELLDSEDL. Positions 237, 246, 249, and 251 each coordinate [2Fe-2S] cluster. The fe-S binding site A stretch occupies residues 237–251; the sequence is CKEKGKKKACKNCTC. Residues Cys-270, Cys-273, Cys-281, and Cys-284 each contribute to the [4Fe-4S] cluster site. 2 short sequence motifs (cx2C motif) span residues 270–273 and 281–284; these read CGNC and CASC. The segment at 270–284 is fe-S binding site B; that stretch reads CGNCYLGDAFRCASC.

This sequence belongs to the anamorsin family. In terms of assembly, monomer. Interacts with NDOR1. Interacts with CHCHD4. [2Fe-2S] cluster is required as a cofactor. Requires [4Fe-4S] cluster as cofactor.

It localises to the cytoplasm. The protein localises to the nucleus. The protein resides in the mitochondrion intermembrane space. In terms of biological role, component of the cytosolic iron-sulfur (Fe-S) protein assembly (CIA) machinery required for the maturation of extramitochondrial Fe-S proteins. Part of an electron transfer chain functioning in an early step of cytosolic Fe-S biogenesis, facilitating the de novo assembly of a [4Fe-4S] cluster on the scaffold complex NUBP1-NUBP2. Electrons are transferred to CIAPIN1 from NADPH via the FAD- and FMN-containing protein NDOR1. NDOR1-CIAPIN1 are also required for the assembly of the diferric tyrosyl radical cofactor of ribonucleotide reductase (RNR), probably by providing electrons for reduction during radical cofactor maturation in the catalytic small subunit. Has anti-apoptotic effects in the cell. Involved in negative control of cell death upon cytokine withdrawal. Promotes development of hematopoietic cells. The protein is Anamorsin of Gallus gallus (Chicken).